A 414-amino-acid polypeptide reads, in one-letter code: Chromobox protein homolog 6 (414 aa).

Residues 11 to 69 (FAAESIIKRRIRKGRIEYLVKWKGWAIKYSTWEPEENILDSRLIAAFEQKERERELYGP) enclose the Chromo domain. Ser107 is modified (phosphoserine). Disordered regions lie at residues 127-152 (HRMSRRPLPRPDPQGGSPGLRPPISP), 267-308 (APFD…VPNW), and 344-365 (ALEPTGAGSSEPEAGDWRPEMS). The segment covering 267-287 (APFDAHSSSSSGCPSPTLQSS) has biased composition (low complexity).

As to quaternary structure, component of a PRC1-like complex. Distinct PRC1-like core complexes are composed of a RING1 subunit (RING1B or RING1A), one of the six PCGF proteins (PCGF1-6), one PHC protein (PHC1-3) and one of the CBX proteins (CBX2, CBX4, CBX6, CBX7 or CBX8). Interacts with PCGF1, PCGF2, PCGF3, BMI1, PCGF5, PCGF6, RING1 and RNF2. May interact with H3C15 and H3C1. Interacts (via chromodomain) with single-stranded RNA (ssRNA). Post-translationally, ubiquitinated. Ubiquitination regulates the function of the Polycomb group (PcG) multiprotein PRC1-like complex. Deubiquitinated by USP26. As to expression, expressed in mouse embryonic stem cells.

The protein resides in the nucleus. The protein localises to the chromosome. Component of a Polycomb group (PcG) multiprotein PRC1-like complex, a complex class required to maintain the transcriptionally repressive state of many genes, including Hox genes, throughout development. PcG PRC1 complex acts via chromatin remodeling and modification of histones; it mediates monoubiquitination of histone H2A 'Lys-119', rendering chromatin heritably changed in its expressibility. Possibly contributes to the target selectivity of the PRC1 complex by binding specific regions of chromatin. Recruitment to chromatin might occur in an H3K27me3-independent fashion. May have a PRC1-independent function in embryonic stem cells. The sequence is that of Chromobox protein homolog 6 (Cbx6) from Mus musculus (Mouse).